We begin with the raw amino-acid sequence, 396 residues long: Elongation factor Tu (396 aa).

The 197-residue stretch at 10-206 folds into the tr-type G domain; it reads KPHVNVGTIG…ALDTFIPEPT (197 aa). The tract at residues 19-26 is G1; the sequence is GHVDHGKT. 19–26 lines the GTP pocket; sequence GHVDHGKT. T26 contacts Mg(2+). The G2 stretch occupies residues 60-64; it reads GITIS. Positions 81–84 are G3; sequence DCPG. GTP-binding positions include 81-85 and 136-139; these read DCPGH and NKAD. Residues 136–139 are G4; that stretch reads NKAD. Residues 174 to 176 form a G5 region; that stretch reads SAR.

This sequence belongs to the TRAFAC class translation factor GTPase superfamily. Classic translation factor GTPase family. EF-Tu/EF-1A subfamily. Monomer.

Its subcellular location is the cytoplasm. It carries out the reaction GTP + H2O = GDP + phosphate + H(+). GTP hydrolase that promotes the GTP-dependent binding of aminoacyl-tRNA to the A-site of ribosomes during protein biosynthesis. This is Elongation factor Tu from Xanthomonas oryzae pv. oryzae (strain MAFF 311018).